A 578-amino-acid polypeptide reads, in one-letter code: Putative ankyrin repeat protein FPV022 (578 aa).

ANK repeat units follow at residues arginine 4–lysine 34, lysine 38–alanine 67, cysteine 68–valine 97, lysine 100–tyrosine 129, tyrosine 160–asparagine 189, glutamate 222–valine 251, histidine 255–methionine 287, tyrosine 320–lysine 349, tyrosine 353–alanine 382, aspartate 386–serine 415, and asparagine 419–lysine 449.

The protein is Putative ankyrin repeat protein FPV022 of Fowlpox virus (strain NVSL) (FPV).